Reading from the N-terminus, the 289-residue chain is (3R)-3-[(carboxymethyl)amino]fatty acid oxygenase/decarboxylase (289 aa).

Y65, Y70, and G93 together coordinate a (3R)-3-[(carboxymethyl)amino]fatty acid. H97 and D99 together coordinate Fe(2+). Residues Y100 and K158 each contribute to the a (3R)-3-[(carboxymethyl)amino]fatty acid site. H260 serves as a coordination point for Fe(2+). H264 is a binding site for 2-oxoglutarate. A (3R)-3-[(carboxymethyl)amino]fatty acid is bound at residue R275.

It belongs to the TfdA dioxygenase family. Fe(2+) is required as a cofactor.

It catalyses the reaction a (3R)-3-[(carboxymethyl)amino]fatty acid + 2 2-oxoglutarate + 2 O2 = a (3R)-3-isocyanyl-fatty acid + 2 succinate + 3 CO2 + 2 H2O. It carries out the reaction a (3R)-3-[(carboxymethyl)amino]fatty acid + 2-oxoglutarate + O2 = a (3R)-3-{[carboxy(hydroxy)methyl]amino}fatty acid + succinate + CO2. The catalysed reaction is a (3R)-3-{[carboxy(hydroxy)methyl]amino}fatty acid + 2-oxoglutarate + O2 = a (3R)-3-isocyanyl-fatty acid + succinate + 2 CO2 + 2 H2O. Its function is as follows. Involved in the biosynthesis of a unique class of isonitrile lipopeptides (INLPs) that seem to play a role in metal acquisition. Catalyzes the conversion of (3R)-3-[(carboxymethyl)amino]fatty acids to (3R)-3-isocyanyl-fatty acids through an oxidative decarboxylation mechanism, thereby generating the isonitrile group of INLPs. This is (3R)-3-[(carboxymethyl)amino]fatty acid oxygenase/decarboxylase from Mycobacterium bovis (strain ATCC BAA-935 / AF2122/97).